The following is a 175-amino-acid chain: MYLARTRFLFFLASLACASIIGTAFYLQQTFGLDPCFLCLIQRAAIIACGVLALCAACHAPGPTGMRRYSLGFLLIALTGLVTAGAQVWLQTASADQLIPFITKLEHLLSLLSLDMCIDRLRSDAMFCAEITWTLFGISLPEWSLLAFTGLALLPLYPLFSEFSHWLATKDRARY.

Topologically, residues 1 to 9 (MYLARTRFL) are cytoplasmic. Residues 10-26 (FFLASLACASIIGTAFY) traverse the membrane as a helical segment. At 27 to 44 (LQQTFGLDPCFLCLIQRA) the chain is on the periplasmic side. A disulfide bridge connects residues cysteine 36 and cysteine 39. Residues 45-61 (AIIACGVLALCAACHAP) traverse the membrane as a helical segment. Residues 62-68 (GPTGMRR) lie on the Cytoplasmic side of the membrane. The helical transmembrane segment at 69–85 (YSLGFLLIALTGLVTAG) threads the bilayer. At 86-142 (AQVWLQTASADQLIPFITKLEHLLSLLSLDMCIDRLRSDAMFCAEITWTLFGISLPE) the chain is on the periplasmic side. Residues 143 to 161 (WSLLAFTGLALLPLYPLFS) form a helical membrane-spanning segment. Topologically, residues 162–175 (EFSHWLATKDRARY) are cytoplasmic.

This sequence belongs to the DsbB family.

Its subcellular location is the cell inner membrane. In terms of biological role, required for disulfide bond formation in some periplasmic proteins. Acts by oxidizing the DsbA protein. In Pseudomonas savastanoi pv. phaseolicola (strain 1448A / Race 6) (Pseudomonas syringae pv. phaseolicola (strain 1448A / Race 6)), this protein is Disulfide bond formation protein B 2.